Here is a 343-residue protein sequence, read N- to C-terminus: tRNA N6-adenosine threonylcarbamoyltransferase (343 aa).

Residues histidine 111 and histidine 115 each contribute to the Fe cation site. Substrate contacts are provided by residues 134–138, aspartate 167, glycine 180, and asparagine 276; that span reads LVSGG. Aspartate 304 provides a ligand contact to Fe cation.

Belongs to the KAE1 / TsaD family. The cofactor is Fe(2+).

The protein localises to the cytoplasm. The enzyme catalyses L-threonylcarbamoyladenylate + adenosine(37) in tRNA = N(6)-L-threonylcarbamoyladenosine(37) in tRNA + AMP + H(+). Functionally, required for the formation of a threonylcarbamoyl group on adenosine at position 37 (t(6)A37) in tRNAs that read codons beginning with adenine. Is involved in the transfer of the threonylcarbamoyl moiety of threonylcarbamoyl-AMP (TC-AMP) to the N6 group of A37, together with TsaE and TsaB. TsaD likely plays a direct catalytic role in this reaction. This is tRNA N6-adenosine threonylcarbamoyltransferase from Hahella chejuensis (strain KCTC 2396).